Consider the following 127-residue polypeptide: Protein translocase subunit SecE (127 aa).

Over 1 to 19 (MSANTEAQGSGRGLEAMKW) the chain is Cytoplasmic. The chain crosses the membrane as a helical span at residues 20-32 (VVVVALLLVAIVG). Residues 33–48 (NYLYRDIMLPLRALAV) are Periplasmic-facing. A helical transmembrane segment spans residues 49–60 (VILIAAAGGVAL). The Cytoplasmic segment spans residues 61–97 (LTTKGKATVAFAREARTEVRKVIWPTRQETLHTTLIV). A helical membrane pass occupies residues 98-115 (AAVTAVMSLILWGLDGIL). Topologically, residues 116–127 (VRLVSFITGLRF) are periplasmic.

It belongs to the SecE/SEC61-gamma family. In terms of assembly, component of the Sec protein translocase complex. Heterotrimer consisting of SecY, SecE and SecG subunits. The heterotrimers can form oligomers, although 1 heterotrimer is thought to be able to translocate proteins. Interacts with the ribosome. Interacts with SecDF, and other proteins may be involved. Interacts with SecA.

It is found in the cell inner membrane. Essential subunit of the Sec protein translocation channel SecYEG. Clamps together the 2 halves of SecY. May contact the channel plug during translocation. This chain is Protein translocase subunit SecE, found in Escherichia coli O157:H7.